Reading from the N-terminus, the 156-residue chain is Glutamine--fructose-6-phosphate aminotransferase [isomerizing] (156 aa).

In terms of domain architecture, SIS spans 4-146 (MAHHIVPARD…VLKGTDVDQP (143 aa)). The For Fru-6P isomerization activity role is filled by Lys-151.

Homodimer.

The protein localises to the cytoplasm. The enzyme catalyses D-fructose 6-phosphate + L-glutamine = D-glucosamine 6-phosphate + L-glutamate. Functionally, catalyzes the first step in hexosamine metabolism, converting fructose-6P into glucosamine-6P using glutamine as a nitrogen source. The chain is Glutamine--fructose-6-phosphate aminotransferase [isomerizing] (glmS) from Sphingobium yanoikuyae (Sphingomonas yanoikuyae).